The primary structure comprises 85 residues: Protein RnfH (85 aa).

Belongs to the UPF0125 (RnfH) family.

This Cereibacter sphaeroides (strain ATCC 17023 / DSM 158 / JCM 6121 / CCUG 31486 / LMG 2827 / NBRC 12203 / NCIMB 8253 / ATH 2.4.1.) (Rhodobacter sphaeroides) protein is Protein RnfH.